An 893-amino-acid polypeptide reads, in one-letter code: UPF0182 protein CLM_0018 (893 aa).

The next 7 helical transmembrane spans lie at 9 to 29 (IPLF…NFII), 49 to 69 (AIII…WMYY), 94 to 114 (LFFI…SSSY), 154 to 174 (VIIS…FILE), 202 to 222 (LAIV…IKIW), 246 to 266 (FYKI…LSIV), and 273 to 293 (VSVC…ASFL).

Belongs to the UPF0182 family.

It localises to the cell membrane. The sequence is that of UPF0182 protein CLM_0018 from Clostridium botulinum (strain Kyoto / Type A2).